The primary structure comprises 179 residues: Large ribosomal subunit protein uL5 (179 aa).

The protein belongs to the universal ribosomal protein uL5 family. In terms of assembly, part of the 50S ribosomal subunit; part of the 5S rRNA/L5/L18/L25 subcomplex. Contacts the 5S rRNA and the P site tRNA. Forms a bridge to the 30S subunit in the 70S ribosome.

In terms of biological role, this is one of the proteins that bind and probably mediate the attachment of the 5S RNA into the large ribosomal subunit, where it forms part of the central protuberance. In the 70S ribosome it contacts protein S13 of the 30S subunit (bridge B1b), connecting the 2 subunits; this bridge is implicated in subunit movement. Contacts the P site tRNA; the 5S rRNA and some of its associated proteins might help stabilize positioning of ribosome-bound tRNAs. The protein is Large ribosomal subunit protein uL5 of Burkholderia multivorans (strain ATCC 17616 / 249).